The primary structure comprises 113 residues: MNTLDFVDQSSLRDDIPAFGPGDTVNVHVKVIEGSKERIQVFKGVVIRRQGGGIRETFTVRKESYGVGVERTFPVHSPNIDHIDVVTRGDVRRAKLYYLRELRGKKAKIKEKR.

The protein belongs to the bacterial ribosomal protein bL19 family.

In terms of biological role, this protein is located at the 30S-50S ribosomal subunit interface and may play a role in the structure and function of the aminoacyl-tRNA binding site. In Mycobacterium sp. (strain JLS), this protein is Large ribosomal subunit protein bL19.